The primary structure comprises 285 residues: MLFNYQSLLVGVSLISQALSAPILESRATADAAAFPDLHRAAKLSSAAYTGCIGKAFDVTITKRIYDLVTDTNGFVGYSTEKKTIAVIMRGSTTITDFVNDIDIALITPELSGVTFPSDVKIMRGVHRPWSAVHDTIITEVKALIAKYPDYTLEAVGHSLGGALTSIAHVALAQNFPDKSLVSNALNAFPIGNQAWADFGTAQAGTFNRGNNVLDGVPNMYSSPLVNFKHYGTEYYSSGTEASTVKCEGQRDKSCSAGNGMYAVTPGHIASFGVVMLTAGCGYLS.

An N-terminal signal peptide occupies residues 1–20; the sequence is MLFNYQSLLVGVSLISQALS. Ser-159 acts as the Nucleophile in catalysis. Catalysis depends on charge relay system residues Asp-215 and His-268.

Belongs to the AB hydrolase superfamily. FaeA family.

The protein resides in the secreted. It catalyses the reaction a triacylglycerol + H2O = a diacylglycerol + a fatty acid + H(+). Secreted alkaline lipase that hydrolyzes acylglycerol lipids such as triacylglycerols and consequently releases free fatty acid. Is able to hydrolyze tributyrin (1,2,3-tributyryl-glycerin). The chain is Secreted alkaline triacylglycerol lipase from Penicillium cyclopium.